The primary structure comprises 316 residues: 4-diphosphocytidyl-2-C-methyl-D-erythritol kinase (316 aa).

The active site involves Lys-23. 108–118 (PVAGGMAGGSA) is an ATP binding site. The active site involves Asp-150.

This sequence belongs to the GHMP kinase family. IspE subfamily.

The enzyme catalyses 4-CDP-2-C-methyl-D-erythritol + ATP = 4-CDP-2-C-methyl-D-erythritol 2-phosphate + ADP + H(+). It functions in the pathway isoprenoid biosynthesis; isopentenyl diphosphate biosynthesis via DXP pathway; isopentenyl diphosphate from 1-deoxy-D-xylulose 5-phosphate: step 3/6. In terms of biological role, catalyzes the phosphorylation of the position 2 hydroxy group of 4-diphosphocytidyl-2C-methyl-D-erythritol. This is 4-diphosphocytidyl-2-C-methyl-D-erythritol kinase from Mycobacterium avium (strain 104).